The sequence spans 127 residues: uncharacterized protein (127 aa).

The N-terminal stretch at 1-23 is a signal peptide; it reads MSKPLKFLLWSSLALLLLQIGSG.

This is an uncharacterized protein from Arabidopsis thaliana (Mouse-ear cress).